Consider the following 244-residue polypeptide: Proteasome subunit alpha type-5 (244 aa).

Belongs to the peptidase T1A family. The 26S proteasome consists of a 20S proteasome core and two 19S regulatory subunits. The 20S proteasome core is composed of 28 subunits that are arranged in four stacked rings, resulting in a barrel-shaped structure. The two end rings are each formed by seven alpha subunits, and the two central rings are each formed by seven beta subunits. The catalytic chamber with the active sites is on the inside of the barrel.

It is found in the cytoplasm. It localises to the nucleus. The proteasome is a multicatalytic proteinase complex which is characterized by its ability to cleave peptides with Arg, Phe, Tyr, Leu, and Glu adjacent to the leaving group at neutral or slightly basic pH. The proteasome has an ATP-dependent proteolytic activity. This chain is Proteasome subunit alpha type-5 (Prosalpha5), found in Drosophila melanogaster (Fruit fly).